Here is a 241-residue protein sequence, read N- to C-terminus: ATP synthase subunit a (241 aa).

5 helical membrane passes run 30–50, 91–111, 128–148, 193–213, and 214–234; these read GQVF…VVVG, FIGT…LVPW, INTT…AGLS, LVVA…VMFL, and GLFT…YYIG.

This sequence belongs to the ATPase A chain family. As to quaternary structure, F-type ATPases have 2 components, CF(1) - the catalytic core - and CF(0) - the membrane proton channel. CF(1) has five subunits: alpha(3), beta(3), gamma(1), delta(1), epsilon(1). CF(0) has four main subunits: a, b, b' and c.

The protein localises to the cellular thylakoid membrane. Its function is as follows. Key component of the proton channel; it plays a direct role in the translocation of protons across the membrane. This chain is ATP synthase subunit a, found in Prochlorococcus marinus (strain MIT 9313).